The sequence spans 294 residues: Ribosomal RNA small subunit methyltransferase A (294 aa).

S-adenosyl-L-methionine contacts are provided by Asn-29, Val-31, Gly-56, Glu-77, Asp-107, and Asn-126.

The protein belongs to the class I-like SAM-binding methyltransferase superfamily. rRNA adenine N(6)-methyltransferase family. RsmA subfamily.

It localises to the cytoplasm. The enzyme catalyses adenosine(1518)/adenosine(1519) in 16S rRNA + 4 S-adenosyl-L-methionine = N(6)-dimethyladenosine(1518)/N(6)-dimethyladenosine(1519) in 16S rRNA + 4 S-adenosyl-L-homocysteine + 4 H(+). Specifically dimethylates two adjacent adenosines (A1518 and A1519) in the loop of a conserved hairpin near the 3'-end of 16S rRNA in the 30S particle. May play a critical role in biogenesis of 30S subunits. The protein is Ribosomal RNA small subunit methyltransferase A of Mycobacterium sp. (strain JLS).